The sequence spans 1390 residues: Nuclear pore complex protein 14 (1390 aa).

2 stretches are compositionally biased toward polar residues: residues 434–455 (SQKP…STVF) and 464–521 (LKSS…STPK). Disordered stretches follow at residues 434–530 (SQKP…KISD), 851–874 (PSSS…TQAD), and 985–1118 (QEIE…SKAA). Over residues 851 to 864 (PSSSLFSASPSTPS) the composition is skewed to low complexity. The segment covering 986 to 1033 (EIEKASSKVETLNKTEEVKDEKSENEVTPDLKSEEPKSLETKVKEEPK) has biased composition (basic and acidic residues). Low complexity predominate over residues 1051-1071 (KTPSFSFNSTTTPKSTSSTSS). Repeat unit 1 spans residues 1073-1074 (FG). The 17 X 2 AA repeats of F-G stretch occupies residues 1073–1373 (FGGGLKTQTP…TPAPTSSVFG (301 aa)). A compositionally biased stretch (polar residues) spans 1078-1090 (KTQTPSSSNSTNI). The stretch at 1091–1092 (FG) is repeat 2. A compositionally biased stretch (low complexity) spans 1095-1109 (TTTTATPTPASNTSS). 6 consecutive repeat copies span residues 1111–1112 (FG), 1122–1123 (FG), 1125–1126 (FG), 1163–1164 (FG), 1166–1167 (FG), and 1178–1179 (FG). A disordered region spans residues 1183 to 1280 (TAPTVPNVDD…QASAPATGTS (98 aa)). Gly residues predominate over residues 1201-1210 (NGGGSGGFMS). Low complexity predominate over residues 1231 to 1243 (TSTGTSASSSSWL). Residues 1244–1245 (FG) form repeat 9. Low complexity predominate over residues 1264 to 1280 (TAGSSAQQASAPATGTS). Repeat copies occupy residues 1283–1284 (FG), 1289–1290 (FG), 1295–1296 (FG), 1300–1301 (FG), 1315–1316 (FG), 1344–1345 (FG), 1357–1358 (FG), and 1372–1373 (FG). Polar residues predominate over residues 1342–1371 (SLFGGGATPQTNTSIFGGGANTTPAPTSSV). Positions 1342-1390 (SLFGGGATPQTNTSIFGGGANTTPAPTSSVFGGGASANANKPTSFTSWR) are disordered. Residues 1378-1390 (ANANKPTSFTSWR) show a composition bias toward polar residues.

In terms of assembly, interacts with caspase ced-3 (via propeptide); the interaction tethers ced-3 to the nuclear membrane and prevents its autoprocessing in absence of ced-4.

It is found in the nucleus. The protein localises to the nuclear pore complex. Its subcellular location is the nucleus membrane. Functionally, may serve as a docking site in the receptor-mediated import of substrates across the nuclear pore complex. Plays a role in apoptosis by tethering caspase ced-3 to the nuclear membrane preventing its autoprocessing in absence of ced-4. The polypeptide is Nuclear pore complex protein 14 (Caenorhabditis elegans).